Consider the following 241-residue polypeptide: Methylthioribulose-1-phosphate dehydratase (241 aa).

Positions 1–11 are enriched in polar residues; the sequence is MSSLCDTSNGE. The tract at residues 1–20 is disordered; that stretch reads MSSLCDTSNGESHADPCQDK. Cysteine 96 provides a ligand contact to substrate. The Zn(2+) site is built by histidine 114 and histidine 116. The active-site Proton donor/acceptor is the glutamate 138. A Zn(2+)-binding site is contributed by histidine 194.

Belongs to the aldolase class II family. MtnB subfamily. Zn(2+) serves as cofactor.

It localises to the cytoplasm. It catalyses the reaction 5-(methylsulfanyl)-D-ribulose 1-phosphate = 5-methylsulfanyl-2,3-dioxopentyl phosphate + H2O. It functions in the pathway amino-acid biosynthesis; L-methionine biosynthesis via salvage pathway; L-methionine from S-methyl-5-thio-alpha-D-ribose 1-phosphate: step 2/6. Its function is as follows. Catalyzes the dehydration of methylthioribulose-1-phosphate (MTRu-1-P) into 2,3-diketo-5-methylthiopentyl-1-phosphate (DK-MTP-1-P). Functions in the methionine salvage pathway. May play a role in apoptosis. This chain is Methylthioribulose-1-phosphate dehydratase, found in Osmerus mordax (Rainbow smelt).